The following is a 573-amino-acid chain: DEAD-box ATP-dependent RNA helicase 47B (573 aa).

Positions 131–159 (KSFEELGLPPLLIDRLNKEGLSTPTEVQS) match the Q motif motif. Residues 162–362 (IPIISQKHDA…RSWGHDPVLV (201 aa)) form the Helicase ATP-binding domain. 175 to 182 (SYTGSGKT) is a binding site for ATP. The short motif at 293 to 296 (DEVD) is the DEAD box element. Residues 421–565 (TLRRCIHALE…PCEFTEGKLL (145 aa)) form the Helicase C-terminal domain.

Belongs to the DEAD box helicase family.

The catalysed reaction is ATP + H2O = ADP + phosphate + H(+). This is DEAD-box ATP-dependent RNA helicase 47B from Oryza sativa subsp. japonica (Rice).